The sequence spans 389 residues: Lipopolysaccharide assembly protein B (389 aa).

A helical transmembrane segment spans residues 1–20 (MLELLFLLLPVAAAYGWYMG). The Cytoplasmic portion of the chain corresponds to 21–389 (RRSAQQNKQD…IKPIRGLDGL (369 aa)). TPR repeat units follow at residues 35 to 68 (LSRD…DTGT), 69 to 102 (VEAH…ASLT), 107 to 140 (LLAI…TDFR), 142 to 174 (GALQ…GKDK), 180 to 213 (AHFY…DKNS), 214 to 247 (ARVS…DREL), and 249 to 282 (SETL…NTGA). Fe cation is bound by residues Cys357, Cys360, Cys371, and Cys374.

This sequence belongs to the LapB family.

It localises to the cell inner membrane. Functionally, modulates cellular lipopolysaccharide (LPS) levels by regulating LpxC, which is involved in lipid A biosynthesis. May act by modulating the proteolytic activity of FtsH towards LpxC. May also coordinate assembly of proteins involved in LPS synthesis at the plasma membrane. In Escherichia coli O157:H7, this protein is Lipopolysaccharide assembly protein B.